Reading from the N-terminus, the 187-residue chain is dCTP deaminase (187 aa).

DCTP is bound by residues 110–115, 134–136, Gln-155, Tyr-169, and Gln-179; these read KSTYAR and TLE. Catalysis depends on Glu-136, which acts as the Proton donor/acceptor.

Belongs to the dCTP deaminase family. As to quaternary structure, homotrimer.

It carries out the reaction dCTP + H2O + H(+) = dUTP + NH4(+). The protein operates within pyrimidine metabolism; dUMP biosynthesis; dUMP from dCTP (dUTP route): step 1/2. Its function is as follows. Catalyzes the deamination of dCTP to dUTP. The chain is dCTP deaminase from Bordetella petrii (strain ATCC BAA-461 / DSM 12804 / CCUG 43448).